The chain runs to 338 residues: 4-hydroxy-3-methylbut-2-enyl diphosphate reductase (338 aa).

A [4Fe-4S] cluster-binding site is contributed by Cys21. (2E)-4-hydroxy-3-methylbut-2-enyl diphosphate is bound by residues His50 and His83. Residues His50 and His83 each coordinate dimethylallyl diphosphate. Isopentenyl diphosphate is bound by residues His50 and His83. Position 105 (Cys105) interacts with [4Fe-4S] cluster. His133 contacts (2E)-4-hydroxy-3-methylbut-2-enyl diphosphate. Residue His133 participates in dimethylallyl diphosphate binding. His133 is a binding site for isopentenyl diphosphate. Glu135 serves as the catalytic Proton donor. Thr173 serves as a coordination point for (2E)-4-hydroxy-3-methylbut-2-enyl diphosphate. Cys203 provides a ligand contact to [4Fe-4S] cluster. Residues Ser231, Ser232, Asn233, and Ser276 each coordinate (2E)-4-hydroxy-3-methylbut-2-enyl diphosphate. Residues Ser231, Ser232, Asn233, and Ser276 each coordinate dimethylallyl diphosphate. Isopentenyl diphosphate is bound by residues Ser231, Ser232, Asn233, and Ser276.

The protein belongs to the IspH family. The cofactor is [4Fe-4S] cluster.

The catalysed reaction is isopentenyl diphosphate + 2 oxidized [2Fe-2S]-[ferredoxin] + H2O = (2E)-4-hydroxy-3-methylbut-2-enyl diphosphate + 2 reduced [2Fe-2S]-[ferredoxin] + 2 H(+). It carries out the reaction dimethylallyl diphosphate + 2 oxidized [2Fe-2S]-[ferredoxin] + H2O = (2E)-4-hydroxy-3-methylbut-2-enyl diphosphate + 2 reduced [2Fe-2S]-[ferredoxin] + 2 H(+). It functions in the pathway isoprenoid biosynthesis; dimethylallyl diphosphate biosynthesis; dimethylallyl diphosphate from (2E)-4-hydroxy-3-methylbutenyl diphosphate: step 1/1. The protein operates within isoprenoid biosynthesis; isopentenyl diphosphate biosynthesis via DXP pathway; isopentenyl diphosphate from 1-deoxy-D-xylulose 5-phosphate: step 6/6. Its function is as follows. Catalyzes the conversion of 1-hydroxy-2-methyl-2-(E)-butenyl 4-diphosphate (HMBPP) into a mixture of isopentenyl diphosphate (IPP) and dimethylallyl diphosphate (DMAPP). Acts in the terminal step of the DOXP/MEP pathway for isoprenoid precursor biosynthesis. This is 4-hydroxy-3-methylbut-2-enyl diphosphate reductase from Streptomyces coelicolor (strain ATCC BAA-471 / A3(2) / M145).